The primary structure comprises 504 residues: Sperm motility kinase 3A (504 aa).

The Protein kinase domain maps to 28–276 (YVMLETIGHG…VAEVMVHPWV (249 aa)). Residues 34-42 (IGHGGCATV) and lysine 57 contribute to the ATP site. Aspartate 147 functions as the Proton acceptor in the catalytic mechanism. The UBA domain occupies 294–334 (KPDPAIVKAMGHIGFQAQDIEDSLRQRKFNQTMASYCLLKK). Disordered stretches follow at residues 389–421 (VCGKSTSKKRDRRVSWPSVLGRPRHTAPTMDHT) and 441–468 (NSSEESTQGHTRASAADKPVHSRGWPRG). Residues 441–451 (NSSEESTQGHT) show a composition bias toward polar residues.

It belongs to the protein kinase superfamily. CAMK Ser/Thr protein kinase family. Smok subfamily. As to expression, testis-specific. Expressed in the testis from 22 days postpartum (22 dpp).

The enzyme catalyses L-seryl-[protein] + ATP = O-phospho-L-seryl-[protein] + ADP + H(+). It catalyses the reaction L-threonyl-[protein] + ATP = O-phospho-L-threonyl-[protein] + ADP + H(+). May play a role in sperm motility, especially in the regulation of flagellar function. The polypeptide is Sperm motility kinase 3A (Mus musculus (Mouse)).